The chain runs to 202 residues: Imidazoleglycerol-phosphate dehydratase (202 aa).

This sequence belongs to the imidazoleglycerol-phosphate dehydratase family.

The protein localises to the cytoplasm. The enzyme catalyses D-erythro-1-(imidazol-4-yl)glycerol 3-phosphate = 3-(imidazol-4-yl)-2-oxopropyl phosphate + H2O. It participates in amino-acid biosynthesis; L-histidine biosynthesis; L-histidine from 5-phospho-alpha-D-ribose 1-diphosphate: step 6/9. In Rhizobium leguminosarum bv. trifolii (strain WSM2304), this protein is Imidazoleglycerol-phosphate dehydratase.